We begin with the raw amino-acid sequence, 87 residues long: UPF0335 protein Meso_3367 (87 aa).

It belongs to the UPF0335 family.

The protein is UPF0335 protein Meso_3367 of Chelativorans sp. (strain BNC1).